The chain runs to 59 residues: U-myrmeciitoxin(01)-Mg5a (59 aa).

The signal sequence occupies residues 1–21; sequence MRLSYLSLALAIIFVLTIMHA. Residues 22–38 constitute a propeptide that is removed on maturation; it reads SNVEAKASADPEPDAVG.

In terms of tissue distribution, expressed by the venom gland.

It localises to the secreted. In terms of biological role, may have antimicrobial properties, like most ant linear peptides. The chain is U-myrmeciitoxin(01)-Mg5a from Myrmecia gulosa (Red bulldog ant).